A 530-amino-acid chain; its full sequence is Glutamate--cysteine ligase (530 aa).

Belongs to the glutamate--cysteine ligase type 1 family. Type 1 subfamily.

The enzyme catalyses L-cysteine + L-glutamate + ATP = gamma-L-glutamyl-L-cysteine + ADP + phosphate + H(+). The protein operates within sulfur metabolism; glutathione biosynthesis; glutathione from L-cysteine and L-glutamate: step 1/2. The protein is Glutamate--cysteine ligase of Azotobacter vinelandii (strain DJ / ATCC BAA-1303).